The sequence spans 214 residues: Adenylate kinase (214 aa).

ATP is bound at residue 10–15; sequence GVGKGT. Residues 30-59 form an NMP region; that stretch reads STGDILRAAVKELTPMGAKAKGYMDSGALV. AMP is bound by residues Thr31, Arg36, 57–59, 85–88, and Gln92; these read ALV and GFPR. Positions 126 to 163 are LID; it reads GRRACANCGAGYHVDFAPSKVAGVCDACSGQLVQREDD. Arg127 is an ATP binding site. Residues Cys130, Cys133, Cys150, and Cys153 each coordinate Zn(2+). AMP is bound by residues Arg160 and Arg171. Gly199 contacts ATP.

Belongs to the adenylate kinase family. Monomer.

It localises to the cytoplasm. The enzyme catalyses AMP + ATP = 2 ADP. It participates in purine metabolism; AMP biosynthesis via salvage pathway; AMP from ADP: step 1/1. Functionally, catalyzes the reversible transfer of the terminal phosphate group between ATP and AMP. Plays an important role in cellular energy homeostasis and in adenine nucleotide metabolism. This is Adenylate kinase from Geobacter sp. (strain M21).